We begin with the raw amino-acid sequence, 150 residues long: Transcriptional repressor NrdR (150 aa).

The segment at 3–34 (CPFCNASDTKVVDTRASEDDKIVRRRRECISC) is a zinc-finger region. The ATP-cone domain occupies 49 to 139 (LTVVKKDKNR…VYREFTDVKS (91 aa)).

The protein belongs to the NrdR family. Zn(2+) serves as cofactor.

Negatively regulates transcription of bacterial ribonucleotide reductase nrd genes and operons by binding to NrdR-boxes. The chain is Transcriptional repressor NrdR from Finegoldia magna (strain ATCC 29328 / DSM 20472 / WAL 2508) (Peptostreptococcus magnus).